A 327-amino-acid polypeptide reads, in one-letter code: Chromatin modification-related protein eaf3 (327 aa).

The Tudor-knot domain maps to 13-66 (ERVLCFHHEILYEAKILDLRHTDPDDRKSPYEYLVHYKGWKNTWDDWVPQDRLR). Residues 85-132 (AALRQKSTKTSLKKKGGSDHSSARGSEERQTSVPGRGTKRARDNDIEK) form a disordered region. The segment covering 100–114 (GGSDHSSARGSEERQ) has biased composition (basic and acidic residues). Residues 138–312 (TRPSVRIVMP…ASNEYIEKSR (175 aa)) form the MRG domain.

This sequence belongs to the MRG family. In terms of assembly, component of the NuA4 histone acetyltransferase complex.

Its subcellular location is the nucleus. Its function is as follows. Involved in deacetylation of histones, chromatin assembly and chromosome segregation. May act as a transcriptional oscillator, directing histone deacetylases to specific chromosomal domains. Component of the NuA4 histone acetyltransferase complex which is involved in transcriptional activation of selected genes principally by acetylation of nucleosomal histone H4 and H2A. The NuA4 complex is also involved in DNA repair. This Emericella nidulans (strain FGSC A4 / ATCC 38163 / CBS 112.46 / NRRL 194 / M139) (Aspergillus nidulans) protein is Chromatin modification-related protein eaf3 (eaf3).